A 369-amino-acid chain; its full sequence is Anhydro-N-acetylmuramic acid kinase (369 aa).

Position 12 to 19 (12 to 19 (GTSLDGVD)) interacts with ATP.

It belongs to the anhydro-N-acetylmuramic acid kinase family.

It catalyses the reaction 1,6-anhydro-N-acetyl-beta-muramate + ATP + H2O = N-acetyl-D-muramate 6-phosphate + ADP + H(+). Its pathway is amino-sugar metabolism; 1,6-anhydro-N-acetylmuramate degradation. It participates in cell wall biogenesis; peptidoglycan recycling. Catalyzes the specific phosphorylation of 1,6-anhydro-N-acetylmuramic acid (anhMurNAc) with the simultaneous cleavage of the 1,6-anhydro ring, generating MurNAc-6-P. Is required for the utilization of anhMurNAc either imported from the medium or derived from its own cell wall murein, and thus plays a role in cell wall recycling. This chain is Anhydro-N-acetylmuramic acid kinase, found in Escherichia coli O7:K1 (strain IAI39 / ExPEC).